The sequence spans 322 residues: Cytochrome c biogenesis protein CcsA (322 aa).

Transmembrane regions (helical) follow at residues 9–29 (IFTHISFSIVSIVIIIHLITL), 44–64 (GMIVTFLCLTGLLITRWIYSG), 71–91 (LYESLIFLSWSFSLIHIVPYF), 143–163 (MILSYAALLCGSLLSVALLVI), 226–246 (VISLGFIFLTIGILSGAVWAN), 255–275 (WDPKETWAFITWIVFAIYLHI), and 287–307 (AIVATLGFLIIWICYFGVNLL).

The protein belongs to the CcmF/CycK/Ccl1/NrfE/CcsA family. In terms of assembly, may interact with Ccs1.

It is found in the plastid. Its subcellular location is the chloroplast thylakoid membrane. Functionally, required during biogenesis of c-type cytochromes (cytochrome c6 and cytochrome f) at the step of heme attachment. This is Cytochrome c biogenesis protein CcsA from Lactuca sativa (Garden lettuce).